The following is a 106-amino-acid chain: Nucleoid-associated protein Nwi_0368 (106 aa).

The protein belongs to the YbaB/EbfC family. In terms of assembly, homodimer.

The protein resides in the cytoplasm. It is found in the nucleoid. In terms of biological role, binds to DNA and alters its conformation. May be involved in regulation of gene expression, nucleoid organization and DNA protection. The protein is Nucleoid-associated protein Nwi_0368 of Nitrobacter winogradskyi (strain ATCC 25391 / DSM 10237 / CIP 104748 / NCIMB 11846 / Nb-255).